Consider the following 365-residue polypeptide: uncharacterized protein (365 aa).

29 to 36 (GPLNSGKS) provides a ligand contact to ATP.

The protein belongs to the archaeal ATPase family.

This is an uncharacterized protein from Methanocaldococcus jannaschii (strain ATCC 43067 / DSM 2661 / JAL-1 / JCM 10045 / NBRC 100440) (Methanococcus jannaschii).